The sequence spans 263 residues: 3-methyl-2-oxobutanoate hydroxymethyltransferase (263 aa).

D45 and D84 together coordinate Mg(2+). Residues 45–46, D84, and K112 each bind 3-methyl-2-oxobutanoate; that span reads DS. E114 provides a ligand contact to Mg(2+). Catalysis depends on E181, which acts as the Proton acceptor.

Belongs to the PanB family. As to quaternary structure, homodecamer; pentamer of dimers. Requires Mg(2+) as cofactor.

The protein localises to the cytoplasm. The enzyme catalyses 3-methyl-2-oxobutanoate + (6R)-5,10-methylene-5,6,7,8-tetrahydrofolate + H2O = 2-dehydropantoate + (6S)-5,6,7,8-tetrahydrofolate. It participates in cofactor biosynthesis; (R)-pantothenate biosynthesis; (R)-pantoate from 3-methyl-2-oxobutanoate: step 1/2. Functionally, catalyzes the reversible reaction in which hydroxymethyl group from 5,10-methylenetetrahydrofolate is transferred onto alpha-ketoisovalerate to form ketopantoate. The sequence is that of 3-methyl-2-oxobutanoate hydroxymethyltransferase from Photorhabdus laumondii subsp. laumondii (strain DSM 15139 / CIP 105565 / TT01) (Photorhabdus luminescens subsp. laumondii).